Consider the following 379-residue polypeptide: Mating-type protein MAT-1 (379 aa).

Positions 60–117 (RARKALNAFVRFRCYYVAIPMFKQWPMKKLSNLIGLLWEADPNKSLWSLMTKAWSTIR) form a DNA-binding region, alpha box.

It belongs to the MATALPHA1 family.

The protein resides in the nucleus. Functionally, mating type proteins are sequence specific DNA-binding proteins that act as master switches in fungal differentiation by controlling gene expression in a cell type-specific fashion. Transcriptional activator that induces the transcription of alpha-specific genes. The polypeptide is Mating-type protein MAT-1 (MAT1) (Curvularia kusanoi (Cochliobolus kusanoi)).